A 686-amino-acid polypeptide reads, in one-letter code: XK-related protein 5 (686 aa).

A run of 5 helical transmembrane segments spans residues 33 to 53, 205 to 225, 239 to 259, 265 to 285, and 297 to 317; these read LLWG…QALS, HFWV…WLVA, LFNL…WDSP, VTFY…ATDF, and IAGV…YYSL. Disordered regions lie at residues 339–387, 448–468, and 490–592; these read GDKT…PPEA, ALSA…LENS, and FASD…APFP. A compositionally biased stretch (basic and acidic residues) spans 340–359; it reads DKTERRDSPRATDLAGKRTE. Polar residues-rich tracts occupy residues 450–468 and 490–509; these read SAQQ…LENS and FASD…TQGE. The segment covering 523–536 has biased composition (gly residues); the sequence is QGKGTGGQQRGGEG. The segment covering 550–567 has biased composition (polar residues); that stretch reads VATSSQQEGSPATLQTAH.

The protein belongs to the XK family.

The protein localises to the cell membrane. The sequence is that of XK-related protein 5 from Homo sapiens (Human).